Here is a 139-residue protein sequence, read N- to C-terminus: Acidic phospholipase A2 S1E6-c (139 aa).

Residues 1-16 (MRTLWILAVLLVGVEG) form the signal peptide. Cystine bridges form between Cys-42–Cys-132, Cys-44–Cys-60, Cys-59–Cys-111, Cys-65–Cys-139, Cys-66–Cys-104, Cys-73–Cys-97, and Cys-91–Cys-102. Positions 43, 45, and 47 each coordinate Ca(2+). Residue His-63 is part of the active site. Ca(2+) is bound at residue Asp-64. Asp-105 is a catalytic residue.

This sequence belongs to the phospholipase A2 family. Group II subfamily. D49 sub-subfamily. In terms of assembly, homodimer. Ca(2+) serves as cofactor. Expressed by the venom gland.

The protein resides in the secreted. The enzyme catalyses a 1,2-diacyl-sn-glycero-3-phosphocholine + H2O = a 1-acyl-sn-glycero-3-phosphocholine + a fatty acid + H(+). Functionally, snake venom phospholipase A2 (PLA2) that inhibits ADP-induced platelet aggregation. PLA2 catalyzes the calcium-dependent hydrolysis of the 2-acyl groups in 3-sn-phosphoglycerides. The protein is Acidic phospholipase A2 S1E6-c of Calloselasma rhodostoma (Malayan pit viper).